A 337-amino-acid chain; its full sequence is Protein-glutamate methylesterase/protein-glutamine glutaminase of group 3 operon (337 aa).

One can recognise a Response regulatory domain in the interval 2 to 119 (KIAIVNDMPL…GDAREAAAPL (118 aa)). Asp-53 is subject to 4-aspartylphosphate. The CheB-type methylesterase domain occupies 144–337 (PLREASQRRG…AGRLTEFFAK (194 aa)). Residues Ser-160, His-187, and Asp-280 contribute to the active site.

Belongs to the CheB family. In terms of processing, phosphorylated by CheA. Phosphorylation of the N-terminal regulatory domain activates the methylesterase activity.

The protein localises to the cytoplasm. It carries out the reaction [protein]-L-glutamate 5-O-methyl ester + H2O = L-glutamyl-[protein] + methanol + H(+). The catalysed reaction is L-glutaminyl-[protein] + H2O = L-glutamyl-[protein] + NH4(+). Functionally, involved in chemotaxis. Part of a chemotaxis signal transduction system that modulates chemotaxis in response to various stimuli. Catalyzes the demethylation of specific methylglutamate residues introduced into the chemoreceptors (methyl-accepting chemotaxis proteins or MCP) by CheR. Also mediates the irreversible deamidation of specific glutamine residues to glutamic acid. The chain is Protein-glutamate methylesterase/protein-glutamine glutaminase of group 3 operon from Pseudomonas putida (strain ATCC 47054 / DSM 6125 / CFBP 8728 / NCIMB 11950 / KT2440).